We begin with the raw amino-acid sequence, 102 residues long: snRNA-activating protein complex subunit 5 (102 aa).

Residues 73–82 show a composition bias toward polar residues; it reads QTTLKLSTRS. The interval 73-102 is disordered; it reads QTTLKLSTRSPMEEEEEEEEEEEEEEESDS. The span at 85 to 102 shows a compositional bias: acidic residues; that stretch reads EEEEEEEEEEEEEEESDS.

Part of the SNAPc complex composed of 5 subunits: SNAPC1, SNAPC2, SNAPC3, SNAPC4 and SNAPC5. SNAPC5 interacts with SNAPC4.

It localises to the nucleus. Part of the SNAPc complex required for the transcription of both RNA polymerase II and III small-nuclear RNA genes. Binds to the proximal sequence element (PSE), a non-TATA-box basal promoter element common to these 2 types of genes. Recruits TBP and BRF2 to the U6 snRNA TATA box. The chain is snRNA-activating protein complex subunit 5 from Mus musculus (Mouse).